Reading from the N-terminus, the 504-residue chain is uncharacterized protein (504 aa).

Residues 36–60 (TAFRMEKEQRLPSQNKPPRGRRRPD) form a disordered region. The Integrase catalytic domain occupies 125–309 (QTHEPGRLGL…RPHLQVLPER (185 aa)).

This is an uncharacterized protein from Sinorhizobium fredii (strain NBRC 101917 / NGR234).